Here is a 305-residue protein sequence, read N- to C-terminus: tRNA dimethylallyltransferase (305 aa).

14 to 21 (GPTASGKS) is an ATP binding site. Substrate is bound at residue 16-21 (TASGKS). The interaction with substrate tRNA stretch occupies residues 39-42 (DSMQ).

This sequence belongs to the IPP transferase family. As to quaternary structure, monomer. Mg(2+) serves as cofactor.

It catalyses the reaction adenosine(37) in tRNA + dimethylallyl diphosphate = N(6)-dimethylallyladenosine(37) in tRNA + diphosphate. Catalyzes the transfer of a dimethylallyl group onto the adenine at position 37 in tRNAs that read codons beginning with uridine, leading to the formation of N6-(dimethylallyl)adenosine (i(6)A). The chain is tRNA dimethylallyltransferase from Bradyrhizobium sp. (strain BTAi1 / ATCC BAA-1182).